The following is a 1194-amino-acid chain: ATP-dependent RNA helicase DHX30 (1194 aa).

A compositionally biased stretch (basic and acidic residues) spans 1 to 10; sequence MFSLDSFRKD. The tract at residues 1–27 is disordered; sequence MFSLDSFRKDRAQHRQRQCKLPPPRLP. Serine 6 and arginine 15 each carry phosphoserine. One can recognise a DRBM domain in the interval 53–121; sequence PKNLLNSVIG…QAAAAACQLF (69 aa). Positions 150–199 are disordered; that stretch reads ADSWWRPEPTMPPTSWRQLNPESIRPGGPGGLSRSLGREEEEDEEEELEE. A compositionally biased stretch (acidic residues) spans 188 to 199; the sequence is EEEEDEEEELEE. 2 positions are modified to phosphoserine: serine 226 and serine 380. In terms of domain architecture, Helicase ATP-binding spans 444–612; the sequence is LNAIEQHPVV…FGGCPVIKVP (169 aa). 457-464 provides a ligand contact to ATP; sequence GDTGCGKT. The short motif at 559 to 562 is the DEAH box element; the sequence is DEVH. Residues 654–827 form the Helicase C-terminal domain; the sequence is LVTDLVLHID…NLVLQAKIHM (174 aa).

The protein belongs to the DEAD box helicase family. DEAH subfamily. In terms of assembly, identified in a complex with TFAM and SSBP1. Interacts with AGO1 and AGO2. Interacts (via N-terminus) with ZC3HAV1 (via N-terminal domain) in an RNA-independent manner. Found in a complex with GRSF1, DDX28, FASTKD2 and FASTKD5. Phosphorylated on Ser-15.

The protein resides in the cytoplasm. Its subcellular location is the mitochondrion. It is found in the mitochondrion matrix. It localises to the mitochondrion nucleoid. The catalysed reaction is ATP + H2O = ADP + phosphate + H(+). Functionally, RNA-dependent helicase. Plays an important role in the assembly of the mitochondrial large ribosomal subunit. Required for optimal function of the zinc-finger antiviral protein ZC3HAV1. Associates with mitochondrial DNA. Involved in nervous system development and differentiation through its involvement in the up-regulation of a number of genes which are required for neurogenesis, including GSC, NCAM1, neurogenin, and NEUROD. In Homo sapiens (Human), this protein is ATP-dependent RNA helicase DHX30 (DHX30).